The chain runs to 181 residues: ADP-ribosylation factor 2 (181 aa).

Residue G2 is the site of N-myristoyl glycine attachment. Residues G24–T31, D67–Q71, and N126–D129 contribute to the GTP site.

It belongs to the small GTPase superfamily. Arf family.

The protein localises to the golgi apparatus. In terms of biological role, GTP-binding protein that functions as an allosteric activator of the cholera toxin catalytic subunit, an ADP-ribosyltransferase. Involved in protein trafficking; may modulate vesicle budding and uncoating within the Golgi apparatus. This chain is ADP-ribosylation factor 2 (ARF2), found in Bos taurus (Bovine).